Here is a 471-residue protein sequence, read N- to C-terminus: MKIKTRFAPSPTGYLHVGGARTALYSWLFARHQDGEFVLRIEDTDLERSTQDAIDAIMDGMNWLSLNWDEGPYYQTKRFDRYNAVIDQMLENGTAYKCYCSKERLEALREQQMEKGDKPRYDGHCRGSHEHHADNEPHVVRFLNPQEGSVIFNDRIRGPIEFSNQELDDLIIRRTDGSPTYNFCVVIDDWDMEITHVIRGEDHINNTPRQINILKALGAPVPEYAHVSMILGDDGKKLSKRHGAVGVMQYRDDGYLPEALLNYLVRLGWSSGDQEIFSIDEMKSLFSLDAVNKSASAFNTEKLQWLNHHYINHLPAEYVATHLSWHIEQAGLDTRTGPQLSELVGLLGERCKTLKEMADSCRYFYEDFAEFDADAAKKHLRPVARQPLELVREKLAAITSWTAENIHHAIQGTADELGQGMGKVGMPLRVAVTGAGQSPGVDVTVHAIGQQRSLARIDKALAFIAERETQQ.

The 'HIGH' region motif lies at 9 to 19 (PSPTGYLHVGG). The short motif at 237–241 (KLSKR) is the 'KMSKS' region element. An ATP-binding site is contributed by Lys-240.

The protein belongs to the class-I aminoacyl-tRNA synthetase family. Glutamate--tRNA ligase type 1 subfamily. Monomer.

It is found in the cytoplasm. The enzyme catalyses tRNA(Glu) + L-glutamate + ATP = L-glutamyl-tRNA(Glu) + AMP + diphosphate. Its function is as follows. Catalyzes the attachment of glutamate to tRNA(Glu) in a two-step reaction: glutamate is first activated by ATP to form Glu-AMP and then transferred to the acceptor end of tRNA(Glu). This Pectobacterium atrosepticum (strain SCRI 1043 / ATCC BAA-672) (Erwinia carotovora subsp. atroseptica) protein is Glutamate--tRNA ligase.